A 681-amino-acid chain; its full sequence is Probable L-type lectin-domain containing receptor kinase S.7 (681 aa).

A signal peptide spans 1–21; the sequence is MSLSRKLLVIFFTWITALSMS. At 22–305 the chain is on the extracellular side; that stretch reads KPIFVSSDNM…PSKKRRHRHN (284 aa). Residues 30–265 are legume-lectin like; sequence NMNFTFKSFT…IHLIENWSFK (236 aa). Residues Asn32, Asn42, Asn86, Asn121, Asn135, Asn261, and Asn281 are each glycosylated (N-linked (GlcNAc...) asparagine). Residues 306 to 326 form a helical membrane-spanning segment; that stretch reads LAIGLGISCPVLICLALFVFG. Over 327 to 681 the chain is Cytoplasmic; that stretch reads YFTLKKWKSV…EGDSIVYVVS (355 aa). Residues 365–643 enclose the Protein kinase domain; sequence FHSSRVIGRG…RVLQILNNEI (279 aa). Residues 371-379 and Lys394 each bind ATP; that span reads IGRGAFGNV. Catalysis depends on Asp493, which acts as the Proton acceptor.

This sequence in the C-terminal section; belongs to the protein kinase superfamily. Ser/Thr protein kinase family. It in the N-terminal section; belongs to the leguminous lectin family.

It localises to the cell membrane. The catalysed reaction is L-seryl-[protein] + ATP = O-phospho-L-seryl-[protein] + ADP + H(+). It catalyses the reaction L-threonyl-[protein] + ATP = O-phospho-L-threonyl-[protein] + ADP + H(+). Functionally, involved in resistance response to the pathogenic oomycetes Phytophthora infestans and Phytophthora capsici. The chain is Probable L-type lectin-domain containing receptor kinase S.7 from Arabidopsis thaliana (Mouse-ear cress).